A 1209-amino-acid chain; its full sequence is ATP-dependent helicase/nuclease subunit A (1209 aa).

One can recognise a UvrD-like helicase ATP-binding domain in the interval 9 to 482 (SQWTDEQWQA…IDLAKNFRSR (474 aa)). An ATP-binding site is contributed by 30 to 37 (AAAGSGKT). The UvrD-like helicase C-terminal domain occupies 510-798 (AALRFGAQDY…RMMTIHKSKG (289 aa)).

Belongs to the helicase family. AddA subfamily. As to quaternary structure, heterodimer of AddA and AddB/RexB. Mg(2+) is required as a cofactor.

The catalysed reaction is Couples ATP hydrolysis with the unwinding of duplex DNA by translocating in the 3'-5' direction.. The enzyme catalyses ATP + H2O = ADP + phosphate + H(+). The heterodimer acts as both an ATP-dependent DNA helicase and an ATP-dependent, dual-direction single-stranded exonuclease. Recognizes the chi site generating a DNA molecule suitable for the initiation of homologous recombination. The AddA nuclease domain is required for chi fragment generation; this subunit has the helicase and 3' -&gt; 5' nuclease activities. This Anoxybacillus flavithermus (strain DSM 21510 / WK1) protein is ATP-dependent helicase/nuclease subunit A.